The chain runs to 729 residues: Rho GTPase-activating protein 28 (729 aa).

Disordered stretches follow at residues 20–42 (AQPPNAESRCAPRAAASHPLSRK) and 55–105 (SNES…AEVT). Residues 65–75 (SRSNSEASVDS) show a composition bias toward polar residues. Phosphoserine is present on Ser-72. Residues 80–89 (DFWREIESIK) are compositionally biased toward basic and acidic residues. Thr-159 bears the Phosphothreonine mark. Residues 176–236 (GVSESPPRDT…SQDKEGSFAV (61 aa)) are disordered. The span at 195-204 (GTKEERELPR) shows a compositional bias: basic and acidic residues. Residues 217–226 (SLNSTTLSDA) show a composition bias toward polar residues. A Rho-GAP domain is found at 380 to 577 (VPLTVLLDGD…LMLKYQKILW (198 aa)). Residues 612 to 631 (TLERETASPKTSKVLQKSPS) are disordered. Polar residues predominate over residues 619–630 (SPKTSKVLQKSP).

As to expression, expressed in testis. Expressed at moderate level in kidney and ovary, and weakly expressed in spleen and skeletal muscle.

Its function is as follows. GTPase activator for the Rho-type GTPases by converting them to an inactive GDP-bound state. The protein is Rho GTPase-activating protein 28 (ARHGAP28) of Homo sapiens (Human).